A 103-amino-acid polypeptide reads, in one-letter code: Small ribosomal subunit protein uS10 (103 aa).

This sequence belongs to the universal ribosomal protein uS10 family. In terms of assembly, part of the 30S ribosomal subunit.

In terms of biological role, involved in the binding of tRNA to the ribosomes. The protein is Small ribosomal subunit protein uS10 of Picrophilus torridus (strain ATCC 700027 / DSM 9790 / JCM 10055 / NBRC 100828 / KAW 2/3).